Here is a 105-residue protein sequence, read N- to C-terminus: Nitrogen fixation nifHD region GlnB-like protein 1 (105 aa).

Belongs to the P(II) protein family.

Functionally, could be involved in the regulation of nitrogen fixation. The polypeptide is Nitrogen fixation nifHD region GlnB-like protein 1 (glnBA) (Methanobacterium ivanovii).